Reading from the N-terminus, the 179-residue chain is MASQNRDPAATSVAAARKGAEPSGGAARGPVGKRLQQELMTLMMSGDKGISAFPESDNLFKWVGTIHGAAGTVYEDLRYKLSLEFPSGYPYNAPTVKFLTPCYHPNVDTQGNICLDILKEKWSALYDVRTILLSIQSLLGEPNIDSPLNTHAAELWKNPTAFKKYLQETYSKQVTSQEP.

Positions 1–31 (MASQNRDPAATSVAAARKGAEPSGGAARGPV) are disordered. Ala-2 is subject to N-acetylalanine. Residue Ser-3 is modified to Phosphoserine. The region spanning 30–175 (PVGKRLQQEL…LQETYSKQVT (146 aa)) is the UBC core domain. Cys-114 (glycyl thioester intermediate) is an active-site residue.

This sequence belongs to the ubiquitin-conjugating enzyme family. In terms of assembly, component of the APC/C complex, composed of at least 14 distinct subunits that assemble into a complex of at least 19 chains with a combined molecular mass of around 1.2 MDa. Within this complex, directly interacts with ANAPC2. Post-translationally, autoubiquitinated by the APC/C complex, leading to its degradation by the proteasome. Its degradation plays a central role in APC/C regulation, allowing cyclin-A accumulation before S phase entry. APC/C substrates inhibit the autoubiquitination of UBE2C/UBCH10 but not its E2 function, hence APC/C remaining active until its substrates have been destroyed.

It catalyses the reaction S-ubiquitinyl-[E1 ubiquitin-activating enzyme]-L-cysteine + [E2 ubiquitin-conjugating enzyme]-L-cysteine = [E1 ubiquitin-activating enzyme]-L-cysteine + S-ubiquitinyl-[E2 ubiquitin-conjugating enzyme]-L-cysteine.. The enzyme catalyses S-ubiquitinyl-[E1 ubiquitin-activating enzyme]-L-cysteine + [acceptor protein]-L-lysine = [E1 ubiquitin-activating enzyme]-L-cysteine + N(6)-monoubiquitinyl-[acceptor protein]-L-lysine.. It functions in the pathway protein modification; protein ubiquitination. In terms of biological role, accepts ubiquitin from the E1 complex and catalyzes its covalent attachment to other proteins. In vitro catalyzes 'Lys-11'- and 'Lys-48'-linked polyubiquitination. Acts as an essential factor of the anaphase promoting complex/cyclosome (APC/C), a cell cycle-regulated ubiquitin ligase that controls progression through mitosis. Acts by initiating 'Lys-11'-linked polyubiquitin chains on APC/C substrates, leading to the degradation of APC/C substrates by the proteasome and promoting mitotic exit. The polypeptide is Ubiquitin-conjugating enzyme E2 C (UBE2C) (Homo sapiens (Human)).